The following is a 617-amino-acid chain: Sodium-coupled monocarboxylate transporter 2 (617 aa).

The Extracellular segment spans residues 1 to 5; that stretch reads MEVKN. The helical transmembrane segment at 6 to 26 threads the bilayer; that stretch reads FAVWDYVVFAALFIISSGIGV. Residues 27-47 lie on the Cytoplasmic side of the membrane; the sequence is FYAIKERKKATSREFLVGGRQ. Residues 48–68 form a helical membrane-spanning segment; sequence MSFGPVALSLTASFMSAVTVL. The Extracellular segment spans residues 69–80; that stretch reads GTPADVYRFGAS. A helical membrane pass occupies residues 81–101; the sequence is FVLFFITYGLVIILTSELFLP. Topologically, residues 102–128 are cytoplasmic; the sequence is VFYRSGITSTYEYLQLRFNKPVRYAAT. A helical transmembrane segment spans residues 129–149; it reads VIYIVQTILYTGVVVYAPALA. Over 150 to 157 the chain is Extracellular; it reads LNQVTGFD. The chain crosses the membrane as a helical span at residues 158–178; the sequence is LWGSVFATGIVCTFYCTLGGL. The Cytoplasmic segment spans residues 179–180; that stretch reads KA. Residues 181-201 traverse the membrane as a helical segment; the sequence is VVWTDAFQMVVMIVGFLTVLI. At 202 to 235 the chain is on the extracellular side; that stretch reads QGSTYAGGLHNVLEQAENGSRLNIFDFDIDPLRR. The N-linked (GlcNAc...) asparagine glycan is linked to Asn-219. A helical membrane pass occupies residues 236–256; the sequence is HTFWTISVGGTFTWLGIYGVN. At 257–273 the chain is on the cytoplasmic side; that stretch reads QSTIQRCISCKTEKHAK. A helical membrane pass occupies residues 274-294; it reads LALYFNLLGLWIILLCAVFSG. Topologically, residues 295–334 are extracellular; that stretch reads LTMYAHFKDCDPWTSGIISAPDQLMPYFVMELFSTMPGLP. The chain crosses the membrane as a helical span at residues 335–357; it reads GLFVACAFSGTLSTVAASINALA. Residues 358–385 lie on the Cytoplasmic side of the membrane; sequence TVTFEDFVKSCFPRLSDKLSTWISKGLC. A helical transmembrane segment spans residues 386–406; sequence LLFGVICTSTAVAASLMGGVI. At 407 to 411 the chain is on the extracellular side; the sequence is QAALS. Residues 412-432 traverse the membrane as a helical segment; the sequence is IHGMCGGPMLGLFSLGILFPF. Residues 433-437 lie on the Cytoplasmic side of the membrane; the sequence is VNWKG. Residues 438-458 form a helical membrane-spanning segment; the sequence is ALAGLLTGILLSFWVAIGAFI. Residues 459 to 507 lie on the Extracellular side of the membrane; it reads YPAPASKTWPLPLSTDQCGLSNVTESVPPVLSSRPAIAETWYALSYLHY. Residue Asn-480 is glycosylated (N-linked (GlcNAc...) asparagine). A helical transmembrane segment spans residues 508–528; it reads STVGCLGCIAAGVIISFLTGL. Residues 529 to 617 lie on the Cytoplasmic side of the membrane; it reads QKGKDIPPLL…NMALEKITHF (89 aa).

The protein belongs to the sodium:solute symporter (SSF) (TC 2.A.21) family.

The protein resides in the apical cell membrane. It carries out the reaction (S)-lactate(out) + Na(+)(out) = (S)-lactate(in) + Na(+)(in). The catalysed reaction is nicotinate(out) + Na(+)(out) = nicotinate(in) + Na(+)(in). The enzyme catalyses pyruvate(out) + Na(+)(out) = pyruvate(in) + Na(+)(in). It catalyses the reaction propanoate(out) + Na(+)(out) = propanoate(in) + Na(+)(in). It carries out the reaction butanoate(out) + Na(+)(out) = butanoate(in) + Na(+)(in). The catalysed reaction is acetoacetate(out) + Na(+)(out) = acetoacetate(in) + Na(+)(in). Its function is as follows. Acts as an electroneutral and low-affinity sodium (Na(+))-dependent sodium-coupled solute transporter. Catalyzes the transport across the plasma membrane of many monocarboxylates such as lactate, pyruvate, nicotinate, propionate, butyrate and beta-D-hydroxybutyrate. May be responsible for the first step of reabsorption of monocarboxylates from the lumen of the proximal tubule of the kidney and the small intestine. May play also a role in monocarboxylates transport in the retina. Mediates electroneutral uptake of lactate, with a stoichiometry of 2 Na(+) for each lactate. This chain is Sodium-coupled monocarboxylate transporter 2 (SLC5A12), found in Bos taurus (Bovine).